Here is a 400-residue protein sequence, read N- to C-terminus: Delta(12) fatty acid desaturase (400 aa).

The helical transmembrane segment at 91–111 threads the bilayer; that stretch reads LAWPAYWIMQGIVCTGIWVLA. The short motif at 112–116 is the Histidine box-1 element; that stretch reads HECGH. A Histidine box-2 motif is present at residues 148-152; that stretch reads HSKHH. The next 3 membrane-spanning stretches (helical) occupy residues 199–219, 245–265, and 277–297; these read IVTL…YLIM, FFDI…LIYA, and YYIV…FLQH. The short motif at 339 to 343 is the Histidine box-3 element; the sequence is HVAHH.

This sequence belongs to the fatty acid desaturase type 1 family.

It localises to the membrane. It carries out the reaction (9Z)-octadecenoyl-CoA + 2 Fe(II)-[cytochrome b5] + O2 + 2 H(+) = (9Z,12Z)-octadecadienoyl-CoA + 2 Fe(III)-[cytochrome b5] + 2 H2O. The catalysed reaction is (9Z)-hexadecenoyl-CoA + 2 Fe(II)-[cytochrome b5] + O2 + 2 H(+) = (9Z,12Z)-hexadecadienoyl-CoA + 2 Fe(III)-[cytochrome b5] + 2 H2O. It participates in lipid metabolism; polyunsaturated fatty acid biosynthesis. Catalyzes the desaturation of oleic acid (Delta(9)-18:1) to linoleic acid (Delta(9), Delta(12)-18:2). This is Delta(12) fatty acid desaturase from Mortierella alpina (Oleaginous fungus).